The chain runs to 223 residues: Cell division protein SepF (223 aa).

Residues 19–81 (YDDEYYDDRG…YPPPGGYRGG (63 aa)) form a disordered region. The segment covering 36 to 69 (PRFEDDYGRYEGRDFEDPRRDPRAGMRADLRGEP) has biased composition (basic and acidic residues).

It belongs to the SepF family. In terms of assembly, homodimer. Interacts with FtsZ.

The protein resides in the cytoplasm. Functionally, cell division protein that is part of the divisome complex and is recruited early to the Z-ring. Probably stimulates Z-ring formation, perhaps through the cross-linking of FtsZ protofilaments. Its function overlaps with FtsA. In Mycobacterium ulcerans (strain Agy99), this protein is Cell division protein SepF.